Consider the following 199-residue polypeptide: Holliday junction branch migration complex subunit RuvA (199 aa).

Residues 1–64 (MIALLTGKLA…EDAINLYGFR (64 aa)) are domain I. A domain II region spans residues 65 to 143 (TQQEKELFQL…KLGLAQPQAG (79 aa)). The interval 144-148 (GATAP) is flexible linker. Positions 149–199 (AKQEIRDDVLSALINLGYKEAVVQKALAELKVTEDATVELVLKQALKILMK) are domain III.

This sequence belongs to the RuvA family. In terms of assembly, homotetramer. Forms an RuvA(8)-RuvB(12)-Holliday junction (HJ) complex. HJ DNA is sandwiched between 2 RuvA tetramers; dsDNA enters through RuvA and exits via RuvB. An RuvB hexamer assembles on each DNA strand where it exits the tetramer. Each RuvB hexamer is contacted by two RuvA subunits (via domain III) on 2 adjacent RuvB subunits; this complex drives branch migration. In the full resolvosome a probable DNA-RuvA(4)-RuvB(12)-RuvC(2) complex forms which resolves the HJ.

The protein resides in the cytoplasm. The RuvA-RuvB-RuvC complex processes Holliday junction (HJ) DNA during genetic recombination and DNA repair, while the RuvA-RuvB complex plays an important role in the rescue of blocked DNA replication forks via replication fork reversal (RFR). RuvA specifically binds to HJ cruciform DNA, conferring on it an open structure. The RuvB hexamer acts as an ATP-dependent pump, pulling dsDNA into and through the RuvAB complex. HJ branch migration allows RuvC to scan DNA until it finds its consensus sequence, where it cleaves and resolves the cruciform DNA. This chain is Holliday junction branch migration complex subunit RuvA, found in Geobacter sp. (strain M21).